Reading from the N-terminus, the 229-residue chain is Ribosomal RNA large subunit methyltransferase E (229 aa).

Positions Met1–Ala20 are disordered. 5 residues coordinate S-adenosyl-L-methionine: Gly75, Trp77, Asp94, Asp110, and Asp134. Residue Lys174 is the Proton acceptor of the active site.

It belongs to the class I-like SAM-binding methyltransferase superfamily. RNA methyltransferase RlmE family.

The protein resides in the cytoplasm. The enzyme catalyses uridine(2552) in 23S rRNA + S-adenosyl-L-methionine = 2'-O-methyluridine(2552) in 23S rRNA + S-adenosyl-L-homocysteine + H(+). Functionally, specifically methylates the uridine in position 2552 of 23S rRNA at the 2'-O position of the ribose in the fully assembled 50S ribosomal subunit. The protein is Ribosomal RNA large subunit methyltransferase E of Rhizorhabdus wittichii (strain DSM 6014 / CCUG 31198 / JCM 15750 / NBRC 105917 / EY 4224 / RW1) (Sphingomonas wittichii).